The chain runs to 254 residues: MIIVISPAKSQNFETATAKYQFTQPIFKDQITKLINTLKHYEVDEIEKLMKISPKLAEEVFTKHNNFDPKSYSELNSKAAIFTFSGDVYKGLEADTLDKKTIEYAQNHLLMLSGLYGLIRPLDLMQAYRLEMGTKIKIDGEILYKYWQDKITAQLNEYFNQQQNKILINLASNEYSQAIDKKSLDAKWLDIDFKENKNGTYKTIGIHAKKARGLMTRYILENRIENISDIKKFNVADYKFNLELSNENLMCFTR.

This sequence belongs to the UPF0246 family.

The chain is UPF0246 protein Fphi_1075 from Francisella philomiragia subsp. philomiragia (strain ATCC 25017 / CCUG 19701 / FSC 153 / O#319-036).